A 318-amino-acid chain; its full sequence is Ribose-phosphate pyrophosphokinase 2 (318 aa).

96-101 is a binding site for ATP; that stretch reads RQDKKD. Residues Asp-128, His-130, Asp-139, and Asp-143 each contribute to the Mg(2+) site. His-130 provides a ligand contact to ATP. The segment at 212–227 is binding of phosphoribosylpyrophosphate; it reads KDRVAILVDDMADTCG.

The protein belongs to the ribose-phosphate pyrophosphokinase family. Homodimer. The active form is probably a hexamer composed of 3 homodimers. Mg(2+) serves as cofactor.

It catalyses the reaction D-ribose 5-phosphate + ATP = 5-phospho-alpha-D-ribose 1-diphosphate + AMP + H(+). It functions in the pathway metabolic intermediate biosynthesis; 5-phospho-alpha-D-ribose 1-diphosphate biosynthesis; 5-phospho-alpha-D-ribose 1-diphosphate from D-ribose 5-phosphate (route I): step 1/1. With respect to regulation, activated by magnesium and inorganic phosphate. Catalyzes the synthesis of phosphoribosylpyrophosphate (PRPP) that is essential for nucleotide synthesis. This Rattus norvegicus (Rat) protein is Ribose-phosphate pyrophosphokinase 2 (Prps2).